Here is a 653-residue protein sequence, read N- to C-terminus: Beta-galactosidase (653 aa).

The signal sequence occupies residues 1–22 (MPGVVRLLALLLVPLLLGSARG). The propeptide occupies 23-27 (LHNAT). A glycan (N-linked (GlcNAc...) asparagine) is linked at N25. Position 82 (Y82) interacts with substrate. A glycan (N-linked (GlcNAc...) asparagine) is linked at N96. The substrate site is built by E128 and N186. E187 functions as the Proton donor in the catalytic mechanism. An intrachain disulfide couples C194 to C229. N246 carries N-linked (GlcNAc...) asparagine glycosylation. The active-site Nucleophile is the E267. Residue Y332 participates in substrate binding. Residues N463, N497, and N554 are each glycosylated (N-linked (GlcNAc...) asparagine). C625 and C633 are disulfide-bonded.

It belongs to the glycosyl hydrolase 35 family. As to quaternary structure, homodimer. May form higher multimers.

The protein localises to the lysosome. The catalysed reaction is Hydrolysis of terminal non-reducing beta-D-galactose residues in beta-D-galactosides.. In terms of biological role, cleaves beta-linked terminal galactosyl residues from gangliosides, glycoproteins, and glycosaminoglycans. The polypeptide is Beta-galactosidase (GLB1) (Bos taurus (Bovine)).